The following is a 209-amino-acid chain: Inducible T-cell costimulator (209 aa).

The N-terminal stretch at 1–19 (MKSDLRYFFLFCIQVEILA) is a signal peptide. Over 20–141 (GEFNDSAASE…YESELCCQLK (122 aa)) the chain is Extracellular. Asn-23 carries an N-linked (GlcNAc...) asparagine glycan. The region spanning 30–133 (MFIFHNGGVQ…LSREYLNIYE (104 aa)) is the Ig-like V-type domain. 2 disulfides stabilise this stretch: Cys-42–Cys-109 and Cys-63–Cys-83. Asn-89 carries an N-linked (GlcNAc...) asparagine glycan. The chain crosses the membrane as a helical span at residues 142-162 (FWLPIGCAAFVTVCVFGCVLM).

Homodimer; disulfide-linked. Interacts with ICOSLG. Interacts with PIK3R1. Interacts with TBK1; this interaction is critical for the maturation of T follicular regulatory cells. Post-translationally, N-glycosylated.

It localises to the cell membrane. Its function is as follows. Stimulatory receptor expressed in activated or antigen-experienced T-cells that plays an important role in the immune response. Upon binding to its ligand ICOSL expressed on antigen presenting cells (APCs), delivers costimulatory signals that enhances all basic T-cell responses to a foreign antigen, namely proliferation, secretion of lymphokines including IL10, up-regulation of molecules that mediate cell-cell interaction, and effective help for antibody secretion by B-cells. Also acts as a costimulatory receptor critical for the differentiation of T follicular regulatory cells upon immune challenges such as viral infection. Mechanistically, potentiates TCR-induced calcium flux by augmenting PLCG1 activation and actin remodeling. In addition, activates PI3K signaling pathways independently of calcium flux. Essential both for efficient interaction between T and B-cells and for normal antibody responses to T-cell dependent antigens. Prevents the apoptosis of pre-activated T-cells. Plays a critical role in CD40-mediated class switching of immunoglobin isotypes. This chain is Inducible T-cell costimulator (ICOS), found in Bos taurus (Bovine).